The sequence spans 396 residues: Phosphoglycerate kinase (396 aa).

Substrate-binding positions include 21–23 (DFN), arginine 36, 59–62 (HLGK), arginine 119, and arginine 156. ATP is bound by residues lysine 206, glycine 294, glutamate 325, and 352-355 (GGDS).

The protein belongs to the phosphoglycerate kinase family. In terms of assembly, monomer.

The protein resides in the cytoplasm. It catalyses the reaction (2R)-3-phosphoglycerate + ATP = (2R)-3-phospho-glyceroyl phosphate + ADP. Its pathway is carbohydrate degradation; glycolysis; pyruvate from D-glyceraldehyde 3-phosphate: step 2/5. The protein is Phosphoglycerate kinase of Listeria monocytogenes serotype 4b (strain CLIP80459).